Here is a 448-residue protein sequence, read N- to C-terminus: UPF0210 protein Pars_1033 (448 aa).

The protein belongs to the UPF0210 family.

In Pyrobaculum arsenaticum (strain DSM 13514 / JCM 11321 / PZ6), this protein is UPF0210 protein Pars_1033.